Here is a 42-residue protein sequence, read N- to C-terminus: Photosystem I reaction center subunit IX (42 aa).

Residues 7-27 traverse the membrane as a helical segment; sequence YLSTAPVLATLWFGFLAGLLI.

This sequence belongs to the PsaJ family.

Its subcellular location is the plastid. It localises to the chloroplast thylakoid membrane. May help in the organization of the PsaE and PsaF subunits. The chain is Photosystem I reaction center subunit IX from Psilotum nudum (Whisk fern).